The chain runs to 301 residues: Putative S-adenosyl-L-methionine-dependent methyltransferase MT0851 (301 aa).

S-adenosyl-L-methionine contacts are provided by residues D127 and 156–157 (DL).

It belongs to the UPF0677 family.

Functionally, exhibits S-adenosyl-L-methionine-dependent methyltransferase activity. The protein is Putative S-adenosyl-L-methionine-dependent methyltransferase MT0851 of Mycobacterium tuberculosis (strain CDC 1551 / Oshkosh).